The following is a 128-amino-acid chain: Sm-like protein LSM1B (128 aa).

One can recognise a Sm domain in the interval 10 to 85; that stretch reads YLSTSLASYL…VVLIGELDTE (76 aa).

This sequence belongs to the snRNP Sm proteins family. Component of the heptameric LSM1-LSM7 complex that forms a seven-membered ring structure with a donut shape. The LSM subunits are arranged in the order LSM1, LSM2, LSM3, LSM6, LSM5, LSM7 and LSM4. LSM1B subunit interacts only with its two neighboring subunits, LSM2 and LSM4. In terms of tissue distribution, expressed in roots, leaves, stems, flowers and siliques.

It is found in the cytoplasm. It localises to the P-body. Its function is as follows. Component of the cytoplasmic LSM1-LSM7 complex which is involved in mRNA degradation by promoting decapping and leading to accurate 5'-3' mRNA decay. LSM1A and LSM1B are essential for the formation of the cytoplasmic LSM1-LSM7 complex which regulates developmental gene expression by the decapping of specific development-related transcripts. Required for P-body formation during heat stress. The sequence is that of Sm-like protein LSM1B from Arabidopsis thaliana (Mouse-ear cress).